We begin with the raw amino-acid sequence, 420 residues long: Glutamate-1-semialdehyde 2,1-aminomutase (420 aa).

An N6-(pyridoxal phosphate)lysine modification is found at Lys259.

The protein belongs to the class-III pyridoxal-phosphate-dependent aminotransferase family. HemL subfamily. Homodimer. The cofactor is pyridoxal 5'-phosphate.

The protein resides in the cytoplasm. The enzyme catalyses (S)-4-amino-5-oxopentanoate = 5-aminolevulinate. It participates in porphyrin-containing compound metabolism; protoporphyrin-IX biosynthesis; 5-aminolevulinate from L-glutamyl-tRNA(Glu): step 2/2. The sequence is that of Glutamate-1-semialdehyde 2,1-aminomutase from Nautilia profundicola (strain ATCC BAA-1463 / DSM 18972 / AmH).